We begin with the raw amino-acid sequence, 425 residues long: UDP-sugar transporter protein SLC35A5 (425 aa).

At 1–7 (MESNCGH) the chain is on the cytoplasmic side. A helical transmembrane segment spans residues 8–28 (PMLSVSSAMYTFLLGAIFITL). The Lumenal segment spans residues 29 to 52 (SSSRILLVKYSANEENKYDYLPTT). Residues 53–73 (VNVCSELVKLVFCALVSFWVL) traverse the membrane as a helical segment. The Cytoplasmic segment spans residues 74–92 (KKEDHQNRKLRCGSWKEFF). A helical transmembrane segment spans residues 93-115 (NFMKWSIPAFLYFLDNLIVFYVL). Over 116–119 (SYLQ) the chain is Lumenal. The chain crosses the membrane as a helical span at residues 120–142 (PAMAVIFSNFSIITTALLFRIVL). Over 143 to 147 (KRHLN) the chain is Cytoplasmic. A helical transmembrane segment spans residues 148–168 (GIQWASLLILFLSIVALTSGT). The Lumenal segment spans residues 169-228 (ETSQHSLAGHGFHHDALFSPSNSCLLFRSECPRKDNCTAKEWTFSEAQWNTTARVFSHIR). N-linked (GlcNAc...) asparagine glycosylation is found at Asn-204 and Asn-218. The helical transmembrane segment at 229-249 (LGLGHVLIIVQCFISSMANIY) threads the bilayer. The Cytoplasmic portion of the chain corresponds to 250-263 (NEKILKEGNQLTES). A helical membrane pass occupies residues 264–284 (IFVQNSKLYFFGVLFNGLTLG). Over 285 to 303 (LQSGNRDQIKNCGIFYGHN) the chain is Lumenal. A helical transmembrane segment spans residues 304-324 (AFSVALIFVTAFQGLSVAFIL). The Cytoplasmic portion of the chain corresponds to 325–330 (KFLDNM). The helical transmembrane segment at 331-351 (FHVLMAQVTTVVITTVSVLVF) threads the bilayer. Residues 352 to 354 (DFR) lie on the Lumenal side of the membrane. A helical transmembrane segment spans residues 355 to 375 (PSLEFFLEAPSVLLSILIYNA). Over 376 to 425 (SNPQGVENVPRKERIRDLSGTLWERSSGDGEELERLTKPKSDIESDEDTF) the chain is Cytoplasmic. Phosphoserine occurs at positions 394, 416, and 420. The tract at residues 398–425 (WERSSGDGEELERLTKPKSDIESDEDTF) is disordered. Basic and acidic residues predominate over residues 408–418 (LERLTKPKSDI).

It belongs to the nucleotide-sugar transporter family. SLC35A subfamily. In terms of assembly, probably forms homooligomers and heterooligomers with SLC35A1, SLC35A2, SLC35A3 and SLC35A4.

Its subcellular location is the golgi apparatus membrane. The enzyme catalyses UMP(out) + UDP-alpha-D-glucuronate(in) = UMP(in) + UDP-alpha-D-glucuronate(out). The catalysed reaction is UMP(out) + UDP-N-acetyl-alpha-D-glucosamine(in) = UMP(in) + UDP-N-acetyl-alpha-D-glucosamine(out). It carries out the reaction UDP-N-acetyl-alpha-D-galactosamine(in) + UMP(out) = UDP-N-acetyl-alpha-D-galactosamine(out) + UMP(in). In terms of biological role, probable UDP-sugar:UMP transmembrane antiporter involved in UDP-alpha-D-glucuronate/UDP-GlcA, UDP-GlcNAc/UDP-N-acetyl-alpha-D-glucosamine and UDP-N-acetyl-alpha-D-galactosamine/UDP-GalNAc transport from the cytosol to the lumen of the Golgi. The chain is UDP-sugar transporter protein SLC35A5 from Bos taurus (Bovine).